Here is a 101-residue protein sequence, read N- to C-terminus: NAD(P)H-quinone oxidoreductase subunit 4L, chloroplastic (101 aa).

Helical transmembrane passes span 2-22 (MLEH…YGLI), 32-52 (MCLE…SDFF), and 61-81 (IFSI…LAIV).

The protein belongs to the complex I subunit 4L family. NDH is composed of at least 16 different subunits, 5 of which are encoded in the nucleus.

The protein resides in the plastid. Its subcellular location is the chloroplast thylakoid membrane. It catalyses the reaction a plastoquinone + NADH + (n+1) H(+)(in) = a plastoquinol + NAD(+) + n H(+)(out). It carries out the reaction a plastoquinone + NADPH + (n+1) H(+)(in) = a plastoquinol + NADP(+) + n H(+)(out). Its function is as follows. NDH shuttles electrons from NAD(P)H:plastoquinone, via FMN and iron-sulfur (Fe-S) centers, to quinones in the photosynthetic chain and possibly in a chloroplast respiratory chain. The immediate electron acceptor for the enzyme in this species is believed to be plastoquinone. Couples the redox reaction to proton translocation, and thus conserves the redox energy in a proton gradient. The protein is NAD(P)H-quinone oxidoreductase subunit 4L, chloroplastic of Daucus carota (Wild carrot).